We begin with the raw amino-acid sequence, 256 residues long: Nuclear shuttle protein (256 aa).

Residues 1–53 (MYPSRNKRGSYFNQRRQYSRNHVWKRPTAAKRHDWKRRPSNTSKPNDEPKMSA) are disordered. A compositionally biased stretch (basic residues) spans 17 to 39 (QYSRNHVWKRPTAAKRHDWKRRP). Positions 21-42 (NHVWKRPTAAKRHDWKRRPSNT) match the Bipartite nuclear localization signal motif. Residues 81–96 (DLGRSEPNRSRSYIRL) carry the Nuclear localization signal motif. Residues 150–187 (ELFGARIHSHGNLSVTPALKDRYYIRHVCKRVLSVEKD) are interaction with Arabidopsis thaliana NSI protein.

Belongs to the begomovirus nuclear shuttle protein family. In terms of assembly, binds to single-stranded and double-stranded viral DNA. Interacts with the host nuclear shuttle interacting (NSI) protein. This interaction may allow NSP to recruit NSI monomers to the viral genome and thus regulate nuclear export of viral genome by NSP.

The protein resides in the host nucleus. It localises to the host cytoplasm. It is found in the host cell membrane. Functionally, binds to the genomic viral ssDNA, shuttles it into and out of the cell nucleus. Begomoviruses use 2 proteins to transport their DNA from cell to cell. The nuclear shuttle protein (NSP) shuttles it between nucleus and cytoplasm and the movement protein (MP) probably transports the DNA-NSP complex to the cell periphery and facilitates movement across the cell wall. This Abutilon mosaic virus (isolate West India) (AbMV) protein is Nuclear shuttle protein.